Consider the following 522-residue polypeptide: Major facilitator-type transporter sorT (522 aa).

The segment at 1–21 (MSHTEPKAPVNTGEVENGHLY) is disordered. A run of 12 helical transmembrane segments spans residues 52-72 (WFIA…SSAY), 89-109 (VFIV…AVWA), 121-141 (QILW…SAGS), 143-163 (NVAT…SPLV), 183-203 (TIYC…GGFV), 211-231 (WVQG…IVFI), 280-300 (WIFL…AIIY), 324-344 (IGGL…VYAI), 366-386 (LPPA…FAWT), 395-415 (VSII…LPIM), 427-447 (ASVL…FPLF), and 457-477 (IHWA…FPLI).

This sequence belongs to the major facilitator superfamily. Sugar transporter (TC 2.A.1.1) family.

Its subcellular location is the membrane. Functionally, major facilitator-type transporter; part of the gene cluster that mediates the biosynthesis of sorbicillinoids, a diverse group of yellow secondary metabolites that restrict growth of competing pathogenic fungi but not of bacteria. This chain is Major facilitator-type transporter sorT, found in Penicillium rubens (strain ATCC 28089 / DSM 1075 / NRRL 1951 / Wisconsin 54-1255) (Penicillium chrysogenum).